The following is a 194-amino-acid chain: Imidazoleglycerol-phosphate dehydratase (194 aa).

It belongs to the imidazoleglycerol-phosphate dehydratase family.

Its subcellular location is the cytoplasm. It catalyses the reaction D-erythro-1-(imidazol-4-yl)glycerol 3-phosphate = 3-(imidazol-4-yl)-2-oxopropyl phosphate + H2O. The protein operates within amino-acid biosynthesis; L-histidine biosynthesis; L-histidine from 5-phospho-alpha-D-ribose 1-diphosphate: step 6/9. The polypeptide is Imidazoleglycerol-phosphate dehydratase (Bacillus cereus (strain G9842)).